The sequence spans 1181 residues: Putative primase (1181 aa).

Positions 1141 to 1181 (RSHSTMVEHDMDDDESTNKKQELEEEDEECIDIDEYNNERF) are disordered. Acidic residues predominate over residues 1163 to 1181 (LEEEDEECIDIDEYNNERF).

It belongs to the eukaryotic-type primase small subunit family.

In terms of biological role, synthesizes small RNA primers for the Okazaki fragments on both template strands at replication forks during viral DNA synthesis. The sequence is that of Putative primase from Magallana gigas (Pacific oyster).